Here is a 359-residue protein sequence, read N- to C-terminus: MLDHVTPFFALFACILVLFALGWHIRSRNVGTITLSLYLFFGNLDNFVNSVAWWSTAEDKAPGFCEVSIRLRHALYIAIPASNLVIARKLESIASTRQVRASASEHKKSIIIDLLISVGLPVLYVSLMIVNQTNRYGIIEQVGCWPFLSLSWVWVLLVAAPVLIVSFASAVYSVLAFRWFWIRRRQFQAVLASSASTLNKARYIRLLVLTAIDMLLFFPIYVGSVSDTIRGAITTSYVSWSYVHTGFSYIPQFSAEVMEMQPSFKARLILSRLVCPISAYIFFAMFGLGQEARQGYKHAVLKALVFCKLRKERQKPIQNHIVANIEVVTFQSRETSGGIDGSPHSEKFSINTPTKYEEA.

Helical transmembrane passes span 5–25, 33–53, 71–87, 110–130, 147–167, 206–226, and 268–288; these read VTPF…GWHI, ITLS…SVAW, LRHA…LVIA, IIID…LMIV, FLSL…IVSF, LLVL…GSVS, and LILS…MFGL. The segment at 335 to 359 is disordered; the sequence is TSGGIDGSPHSEKFSINTPTKYEEA. The segment covering 348 to 359 has biased composition (polar residues); the sequence is FSINTPTKYEEA.

It belongs to the G-protein coupled receptor 4 family.

The protein resides in the membrane. Functionally, receptor for the A2 pheromone, a prenylated mating factor. This chain is Pheromone receptor 1 (PRA1), found in Ustilago hordei (Barley covered smut fungus).